We begin with the raw amino-acid sequence, 128 residues long: Large ribosomal subunit protein bL17 (128 aa).

This sequence belongs to the bacterial ribosomal protein bL17 family. In terms of assembly, part of the 50S ribosomal subunit. Contacts protein L32.

This Streptococcus pneumoniae serotype 4 (strain ATCC BAA-334 / TIGR4) protein is Large ribosomal subunit protein bL17.